Here is a 573-residue protein sequence, read N- to C-terminus: Protein phosphatase EYA3 (573 aa).

Methionine 1 is modified (N-acetylmethionine). 2 disordered regions span residues 1-46 (MEEE…LASN) and 236-296 (TYQS…DATS). Positions 20–46 (SGEQTISQVSNPDVSDQKPETSSLASN) are enriched in polar residues. Over residues 254-271 (LSSGDPSTSPSLSQTTPS) the composition is skewed to low complexity. Residues serine 262 and serine 266 each carry the phosphoserine modification. The active-site Nucleophile is aspartate 309. Residues aspartate 309 and aspartate 311 each contribute to the Mg(2+) site. Aspartate 311 (proton donor) is an active-site residue. A phosphoserine mark is found at serine 438 and serine 472. Position 537 (aspartate 537) interacts with Mg(2+).

Belongs to the HAD-like hydrolase superfamily. EYA family. Interacts with SIX1 and DACH1, and probably SIX2, SIX4, SIX5. The cofactor is Mg(2+). Post-translationally, ser-266 phosphorylation is required for localization at sites of DNA damage and directing interaction with H2AX.

The protein resides in the cytoplasm. It is found in the nucleus. The enzyme catalyses O-phospho-L-tyrosyl-[protein] + H2O = L-tyrosyl-[protein] + phosphate. Functionally, tyrosine phosphatase that specifically dephosphorylates 'Tyr-142' of histone H2AX (H2AXY142ph). 'Tyr-142' phosphorylation of histone H2AX plays a central role in DNA repair and acts as a mark that distinguishes between apoptotic and repair responses to genotoxic stress. Promotes efficient DNA repair by dephosphorylating H2AX, promoting the recruitment of DNA repair complexes containing MDC1. Its function as histone phosphatase probably explains its role in transcription regulation during organogenesis. Coactivates SIX1, and seems to coactivate SIX2, SIX4 and SIX5. The repression of precursor cell proliferation in myoblasts by SIX1 is switched to activation through recruitment of EYA3 to the SIX1-DACH1 complex and seems to be dependent on EYA3 phosphatase activity. May be involved in development of the eye. The chain is Protein phosphatase EYA3 (EYA3) from Homo sapiens (Human).